The chain runs to 384 residues: ATP phosphoribosyltransferase regulatory subunit (384 aa).

Belongs to the class-II aminoacyl-tRNA synthetase family. HisZ subfamily. As to quaternary structure, heteromultimer composed of HisG and HisZ subunits.

It localises to the cytoplasm. It functions in the pathway amino-acid biosynthesis; L-histidine biosynthesis; L-histidine from 5-phospho-alpha-D-ribose 1-diphosphate: step 1/9. Functionally, required for the first step of histidine biosynthesis. May allow the feedback regulation of ATP phosphoribosyltransferase activity by histidine. The sequence is that of ATP phosphoribosyltransferase regulatory subunit from Rhodospirillum rubrum (strain ATCC 11170 / ATH 1.1.1 / DSM 467 / LMG 4362 / NCIMB 8255 / S1).